A 1059-amino-acid polypeptide reads, in one-letter code: Protein OPAQUE10 (1059 aa).

7 tandem repeats follow at residues 269-342, 343-416, 417-490, 491-564, 565-638, 639-712, and 713-786. The interval 269-786 is 7 X approximate repeats; that stretch reads SLLEPEDSVN…SRPIHDKESC (518 aa). The tract at residues 511-534 is disordered; the sequence is FNDAPNKESEGYGESGRGKHGEKS. Positions 515-534 are enriched in basic and acidic residues; that stretch reads PNKESEGYGESGRGKHGEKS. Disordered stretches follow at residues 732–756, 856–875, and 889–998; these read QYSD…EEKS, ETLA…DTGT, and SVCS…SGKG. Residues 858–869 show a composition bias toward basic and acidic residues; that stretch reads LADHPKKEEAGL. Composition is skewed to polar residues over residues 907-924 and 945-958; these read DFSS…NTGG and ASDS…PEAS. The segment covering 984-994 has biased composition (basic and acidic residues); sequence TRGRPEGDAPR. Residues 1003-1023 traverse the membrane as a helical segment; the sequence is VAGGITLVGAVFFMFHLSAAL.

As to quaternary structure, homodimer. Interacts (via N-terminus) with FL1 (via C-terminus), HIP, 19 kDa alpha-zein (AC P06677), 22 kDa alpha-zein (AC O48966), 16 kDa gamma-zein (AC P08031) and 50 kDa gamma-zein (AC C0P381). In terms of tissue distribution, expressed in kernels.

The protein resides in the endoplasmic reticulum membrane. Cereal endosperm protein required for the ring-shaped distribution of 22 kDa alpha- and 16 kDa gamma-zeins in protein bodies. The polypeptide is Protein OPAQUE10 (Zea mays (Maize)).